The sequence spans 685 residues: MQDIQLDKLLSADMSPENAQQVMQALSQSLNEHNIRYYVDDAPTITDSEYDRLMQCLIKLEAQFPQFIVADSPTQRVGGLALAKFDQITHLKPMLSLDNAFGEADFSAFHKRVTDKVGEVSFCCEPKLDGLAVSILYRHGVLERAATRGDGTVGEDITENVKTIKSIPLKLRGNDFPEVVEVRGEAFMPKAAFEALNERARAKDEKLFVNPRNAAAGSLRQLDSKITASRSLAFYAYALGVVEPDSYSLGKTHYEQLQQLKSWGLPVSNEIKVCEELDQVFDYYKDILTRRSDLPFEIDGVVMKVNDIAQQQRLGFVAKSPRWAIAYKFPAQEEMTLLEGVDFQVGRTGAVTPVARLKPVFVGGVTVSNATLHNADEIERLGIKIGDTVIIRRAGDVIPQIVAIVPERRPETATDIVFPHNCPVCGSLVERLEGEAVARCSGGLFCEAQRKEAIKHFASRKALDIDGMGDKVVEQLIDKELVQSPADLFKLTASMMTMLDRMGMKSATNLAAAIEAAKTTTLARFLYALGIREVGEATAANLAAHFASLDALRVATVEQLTAVEDVGVVVAQHVAHFFAQPHNLEVIDALIAAGVHWPAIEAPSADAQPLKGQTWVLTGTLNQLNRNDAKAQLQTLGAKVAGSVSKNTDCLVAGEAAGSKLAKAQELGVKVIDEEALLALFAANR.

Residues 47–51 (DSEYD), 96–97 (SL), and glutamate 125 contribute to the NAD(+) site. The active-site N6-AMP-lysine intermediate is lysine 127. NAD(+) is bound by residues arginine 148, glutamate 185, lysine 304, and lysine 328. Zn(2+)-binding residues include cysteine 422, cysteine 425, cysteine 440, and cysteine 446. In terms of domain architecture, BRCT spans 605–685 (ADAQPLKGQT…ALLALFAANR (81 aa)).

The protein belongs to the NAD-dependent DNA ligase family. LigA subfamily. The cofactor is Mg(2+). Mn(2+) is required as a cofactor.

The catalysed reaction is NAD(+) + (deoxyribonucleotide)n-3'-hydroxyl + 5'-phospho-(deoxyribonucleotide)m = (deoxyribonucleotide)n+m + AMP + beta-nicotinamide D-nucleotide.. In terms of biological role, DNA ligase that catalyzes the formation of phosphodiester linkages between 5'-phosphoryl and 3'-hydroxyl groups in double-stranded DNA using NAD as a coenzyme and as the energy source for the reaction. It is essential for DNA replication and repair of damaged DNA. The protein is DNA ligase of Shewanella sp. (strain W3-18-1).